Here is a 163-residue protein sequence, read N- to C-terminus: 2-C-methyl-D-erythritol 2,4-cyclodiphosphate synthase (163 aa).

Asp10 and His12 together coordinate a divalent metal cation. 4-CDP-2-C-methyl-D-erythritol 2-phosphate-binding positions include 10–12 and 36–37; these read DVH and HS. His44 contributes to the a divalent metal cation binding site. 4-CDP-2-C-methyl-D-erythritol 2-phosphate-binding positions include 58 to 60, 63 to 67, 134 to 137, Phe141, and Arg144; these read DIG, FPDND, and TTTE.

This sequence belongs to the IspF family. As to quaternary structure, homotrimer. It depends on a divalent metal cation as a cofactor.

The enzyme catalyses 4-CDP-2-C-methyl-D-erythritol 2-phosphate = 2-C-methyl-D-erythritol 2,4-cyclic diphosphate + CMP. The protein operates within isoprenoid biosynthesis; isopentenyl diphosphate biosynthesis via DXP pathway; isopentenyl diphosphate from 1-deoxy-D-xylulose 5-phosphate: step 4/6. Its function is as follows. Involved in the biosynthesis of isopentenyl diphosphate (IPP) and dimethylallyl diphosphate (DMAPP), two major building blocks of isoprenoid compounds. Catalyzes the conversion of 4-diphosphocytidyl-2-C-methyl-D-erythritol 2-phosphate (CDP-ME2P) to 2-C-methyl-D-erythritol 2,4-cyclodiphosphate (ME-CPP) with a corresponding release of cytidine 5-monophosphate (CMP). The protein is 2-C-methyl-D-erythritol 2,4-cyclodiphosphate synthase of Carboxydothermus hydrogenoformans (strain ATCC BAA-161 / DSM 6008 / Z-2901).